A 54-amino-acid polypeptide reads, in one-letter code: Large ribosomal subunit protein bL33 (54 aa).

This sequence belongs to the bacterial ribosomal protein bL33 family.

This is Large ribosomal subunit protein bL33 from Corynebacterium glutamicum (strain R).